The primary structure comprises 785 residues: Phenylalanine--tRNA ligase beta subunit (785 aa).

Residues 39–147 (FPIPRGVVFA…DALPPGTPLA (109 aa)) enclose the tRNA-binding domain. Residues 399 to 474 (KPPEAIPFRP…RIQGYETIPL (76 aa)) form the B5 domain. Residues D452, D458, E461, and E462 each coordinate Mg(2+). One can recognise an FDX-ACB domain in the interval 688 to 780 (SRHPAAFRDL…ALRARGFGLR (93 aa)).

Belongs to the phenylalanyl-tRNA synthetase beta subunit family. Type 1 subfamily. As to quaternary structure, tetramer of two alpha and two beta subunits. It depends on Mg(2+) as a cofactor.

It localises to the cytoplasm. It carries out the reaction tRNA(Phe) + L-phenylalanine + ATP = L-phenylalanyl-tRNA(Phe) + AMP + diphosphate + H(+). The chain is Phenylalanine--tRNA ligase beta subunit from Thermus thermophilus (strain ATCC BAA-163 / DSM 7039 / HB27).